Consider the following 245-residue polypeptide: MIIPALDLIEGQVVRLFQGDYGQVTEYKVDPAEQFNLYHQAGANWLHLVDLTGAKDTTARQLDLIARLLASTPANIQIGGGVRNEDDVQDLLNAGAQRVVVGSTAVKQPELVKGWMEKYGAEKIVLALDINIDENGTRNVAISGWQEDSGVTIEALLEDYLTVGLKHVLCTDISRDGTLQGSNVELYVDLCKQYPQVQFQSSGGIGSLDDIAALKGSGVAGVIVGRALLDGKFTAEEAFQCWQSE.

The active-site Proton acceptor is Asp7. The active-site Proton donor is the Asp129.

The protein belongs to the HisA/HisF family.

Its subcellular location is the cytoplasm. It catalyses the reaction 1-(5-phospho-beta-D-ribosyl)-5-[(5-phospho-beta-D-ribosylamino)methylideneamino]imidazole-4-carboxamide = 5-[(5-phospho-1-deoxy-D-ribulos-1-ylimino)methylamino]-1-(5-phospho-beta-D-ribosyl)imidazole-4-carboxamide. It participates in amino-acid biosynthesis; L-histidine biosynthesis; L-histidine from 5-phospho-alpha-D-ribose 1-diphosphate: step 4/9. The sequence is that of 1-(5-phosphoribosyl)-5-[(5-phosphoribosylamino)methylideneamino] imidazole-4-carboxamide isomerase from Aliivibrio fischeri (strain ATCC 700601 / ES114) (Vibrio fischeri).